Reading from the N-terminus, the 32-residue chain is Protein YthB (32 aa).

The chain is Protein YthB from Escherichia coli (strain K12).